We begin with the raw amino-acid sequence, 338 residues long: Outer membrane transporter protein TsaT (338 aa).

A signal peptide spans 1-22 (MNFRRRLCTAALIAALPLASQA).

As to quaternary structure, part of a two-component transport system composed of TsaT and TsaS.

Its subcellular location is the cell outer membrane. Its function is as follows. Involved in the uptake of p-toluenesulphonate (TSA). Forms a large, general diffusion pore with a preference for anions. This Comamonas testosteroni (Pseudomonas testosteroni) protein is Outer membrane transporter protein TsaT (tsaT).